The sequence spans 376 residues: Lactosylceramide 1,3-N-acetyl-beta-D-glucosaminyltransferase (376 aa).

At 1-13 (MRLFVSRRVKRWK) the chain is on the cytoplasmic side. Residues 14–34 (IFHFFVTCFILSFMVFWSPIN) form a helical; Signal-anchor for type II membrane protein membrane-spanning segment. Residues 35 to 376 (NYIMSHMKSY…NSYPCWAAFA (342 aa)) are Lumenal-facing. The N-linked (GlcNAc...) asparagine glycan is linked to N57.

This sequence belongs to the glycosyltransferase 31 family. As to expression, highly expressed in adult spleen, placenta and cerebellar Purkinje cells where it colocalizes with HNK-1. Expressed at lower level in brain, lung, thymus and muscle.

Its subcellular location is the golgi apparatus membrane. It catalyses the reaction a beta-D-Gal-(1-&gt;4)-beta-D-Glc-(1&lt;-&gt;1)-Cer(d18:1(4E)) + UDP-N-acetyl-alpha-D-glucosamine = a beta-D-GlcNAc-(1-&gt;3)-beta-D-Gal-(1-&gt;4)-beta-D-Glc-(1&lt;-&gt;1)-Cer(d18:1(4E)) + UDP + H(+). The enzyme catalyses a neolactoside nLc4Cer(d18:1(4E)) + UDP-N-acetyl-alpha-D-glucosamine = a neolactoside IV(3)-beta-GlcNAc-nLc4Cer(d18:1(4E)) + UDP + H(+). It functions in the pathway protein modification; protein glycosylation. Functionally, beta-1,3-N-acetylglucosaminyltransferase that plays a key role in the synthesis of lacto- or neolacto-series carbohydrate chains on glycolipids, notably by participating in biosynthesis of HNK-1 and Lewis X carbohydrate structures. Has strong activity toward lactosylceramide (LacCer) and neolactotetraosylceramide (nLc(4)Cer; paragloboside), resulting in the synthesis of Lc(3)Cer and neolactopentaosylceramide (nLc(5)Cer), respectively. Plays a central role in regulating neolacto-series glycolipid synthesis during embryonic development. In Mus musculus (Mouse), this protein is Lactosylceramide 1,3-N-acetyl-beta-D-glucosaminyltransferase.